A 643-amino-acid chain; its full sequence is MIKITLKDGSIKEVEAGLSIFEIAQSISQGLARNACCGILNGKVEDLRFIVNEDSSLEICTFDSKEGQHAFNHTASHVLAAAVKRLFPQDKLAIGPSIDNGFYYDFDTEKPFSADQLNKLEEEMKKIIKENPEIKRFELPRNEALELMKDEPYKVELINDLPEGEVISFYQIGDFVDLCAGPHLMAVKPIKAVKLLRSTGAYWKGDEKNKMLSRVYGTAFPKKSELDAYLEALEEAKKRDHNKLGRELGIFTTDENVGQGLPLLMPKGARIIQTLQRWIEDEEQRRGYVLTKTPLMAKSDLYKISGHWDHYKDGMFVLGDEEKDSEVFALRPMTCPFQYAIYNSTQHSYRDLPVRFAETSTLFRNESSGEMHGLIRVRQFTLADGHIVCTPEQLEDEFKNTVDLVKYVMETLGIADDITYRFSKWDPNNTEKYINDPEAWENTQNIMREILNHLNIDFTEADDEAAFYGPKLDIQFKNVHGKEDTIITIQIDFALAERFGMYYIDKDGEKKRPYIIHRSSIGCYERTLAMLIEKYAGALPTWIAPVQAKVLPLSDKYADYANEVVEELRRRGVRVEADHRAEKIGYKIREARLERTPYILVVGEKEAENKEVSVRSRKNGEEGAMPLADFVNRIVLEIANREN.

Positions 1 to 61 (MIKITLKDGS…NEDSSLEICT (61 aa)) constitute a TGS domain. A catalytic region spans residues 240-540 (DHNKLGRELG…LIEKYAGALP (301 aa)). Residues Cys-335, His-386, and His-517 each coordinate Zn(2+).

Belongs to the class-II aminoacyl-tRNA synthetase family. As to quaternary structure, homodimer. Requires Zn(2+) as cofactor.

It is found in the cytoplasm. The enzyme catalyses tRNA(Thr) + L-threonine + ATP = L-threonyl-tRNA(Thr) + AMP + diphosphate + H(+). Its function is as follows. Catalyzes the attachment of threonine to tRNA(Thr) in a two-step reaction: L-threonine is first activated by ATP to form Thr-AMP and then transferred to the acceptor end of tRNA(Thr). Also edits incorrectly charged L-seryl-tRNA(Thr). In Clostridium perfringens (strain ATCC 13124 / DSM 756 / JCM 1290 / NCIMB 6125 / NCTC 8237 / Type A), this protein is Threonine--tRNA ligase.